The following is a 386-amino-acid chain: Ferredoxin--NADP reductase (386 aa).

The region spanning 9–67 (SRMFRYEVVGLRQTAETEKTNYAIRNSGSQFFNVPYDRMNQFMQQITRWGGKIVSIQPL) is the CpcD-like domain. The region spanning 104 to 228 (NNPCIGKVIS…TGPVGKEMLL (125 aa)) is the FAD-binding FR-type domain. FAD contacts are provided by residues 163–166 (RLYS), 184–186 (CVR), Tyr190, 202–204 (VCS), and Thr243. NADP(+) is bound by residues Ser166 and Arg186. NADP(+) is bound by residues Thr243, 275–276 (VA), 305–306 (SR), 315–319 (KMYIQ), 344–345 (GL), and Glu384.

This sequence belongs to the ferredoxin--NADP reductase type 1 family. The cofactor is FAD.

It localises to the cellular thylakoid membrane. The enzyme catalyses 2 reduced [2Fe-2S]-[ferredoxin] + NADP(+) + H(+) = 2 oxidized [2Fe-2S]-[ferredoxin] + NADPH. In Thermosynechococcus vestitus (strain NIES-2133 / IAM M-273 / BP-1), this protein is Ferredoxin--NADP reductase (petH).